Consider the following 777-residue polypeptide: Glucocorticoid receptor (777 aa).

A compositionally biased stretch (basic and acidic residues) spans 1–14 (MDSKESLTPGKEEN). A disordered region spans residues 1-22 (MDSKESLTPGKEENPSSVLTQE). The tract at residues 1–420 (MDSKESLTPG…TATTGPPPKL (420 aa)) is modulating. Residue threonine 8 is modified to Phosphothreonine. Residue arginine 23 is modified to Omega-N-methylarginine. 4 positions are modified to phosphoserine: serine 45, serine 113, serine 134, and serine 141. Positions 130 to 183 (NRSTSVPENPKSSASSSVSAAPKEKEFPKTHSDVSSEQQNLKGQTGTNGGNAKL) are disordered. The segment covering 134–150 (SVPENPKSSASSSVSAA) has biased composition (low complexity). Residues 151–163 (PKEKEFPKTHSDV) show a composition bias toward basic and acidic residues. The segment covering 164–174 (SSEQQNLKGQT) has biased composition (polar residues). Phosphoserine is present on residues serine 203, serine 211, and serine 226. Residue lysine 258 forms a Glycyl lysine isopeptide (Lys-Gly) (interchain with G-Cter in SUMO2) linkage. Serine 267 is subject to Phosphoserine. Glycyl lysine isopeptide (Lys-Gly) (interchain with G-Cter in SUMO); alternate cross-links involve residues lysine 277 and lysine 293. Residues lysine 277 and lysine 293 each participate in a glycyl lysine isopeptide (Lys-Gly) (interchain with G-Cter in SUMO2); alternate cross-link. Over residues 394–414 (SSPSMRPDVSSPPSSSSTATT) the composition is skewed to low complexity. Residues 394–415 (SSPSMRPDVSSPPSSSSTATTG) form a disordered region. Serine 404 is modified (phosphoserine). Lysine 419 participates in a covalent cross-link: Glycyl lysine isopeptide (Lys-Gly) (interchain with G-Cter in ubiquitin). 2 NR C4-type zinc fingers span residues 421 to 441 (CLVC…CGSC) and 457 to 481 (CAGR…YRKC). The nuclear receptor DNA-binding region spans 421–486 (CLVCSDEASG…RYRKCLQAGM (66 aa)). N6-acetyllysine is present on residues lysine 480, lysine 492, lysine 494, and lysine 495. The interval 485–777 (GMNLEARKTK…NIRKLLFHQK (293 aa)) is interaction with CLOCK. Residues 487–523 (NLEARKTKKKIKGIQQATTGVSQETSENPANKTIVPA) form a hinge region. An NR LBD domain is found at 524-758 (TLPQLTPTLV…FPEMLAEIIT (235 aa)). An interaction with CRY1 region spans residues 532–697 (LVSLLEVIEP…EIRMTYIKEL (166 aa)). A Glycyl lysine isopeptide (Lys-Gly) (interchain with G-Cter in SUMO) cross-link involves residue lysine 703.

The protein belongs to the nuclear hormone receptor family. NR3 subfamily. Heteromultimeric cytoplasmic complex with HSP90AA1, HSPA1A/HSPA1B, and FKBP5 or another immunophilin such as PPID, STIP1, or the immunophilin homolog PPP5C. Upon ligand binding FKBP5 dissociates from the complex and FKBP4 takes its place, thereby linking the complex to dynein and mediating transport to the nucleus, where the complex dissociates. Probably forms a complex composed of chaperones HSP90 and HSP70, co-chaperones CDC37, PPP5C, TSC1 and client protein TSC2, CDK4, AKT, RAF1 and NR3C1; this complex does not contain co-chaperones STIP1/HOP and PTGES3/p23. Directly interacts with UNC45A. Binds to DNA as a homodimer, and as heterodimer with NR3C2 or the retinoid X receptor. Binds STAT5A and STAT5B homodimers and heterodimers. Interacts with NRIP1, POU2F1, POU2F2 and TRIM28. Interacts with several coactivator complexes, including the SMARCA4 complex, CREBBP/EP300, TADA2L (Ada complex) and p160 coactivators such as NCOA2 and NCOA6. Interaction with BAG1 inhibits transactivation. Interacts with HEXIM1 and TGFB1I1. Interacts with NCOA1. Interacts with NCOA3, SMARCA4, SMARCC1, SMARCD1, and SMARCE1. Interacts with CLOCK, CRY1 and CRY2 in a ligand-dependent fashion. Interacts with CIART. Interacts with RWDD3. Interacts with UBE2I/UBC9 and this interaction is enhanced in the presence of RWDD3. Interacts with GRIP1. Interacts with NR4A3 (via nuclear receptor DNA-binding domain), represses transcription activity of NR4A3 on the POMC promoter Nur response element (NurRE). Directly interacts with PNRC2 to attract and form a complex with UPF1 and DCP1A; the interaction leads to rapid mRNA degradation. Interacts with GSK3B. Interacts with FNIP1 and FNIP2. Interacts (via C-terminus) with HNRNPU (via C-terminus). Interacts with MCM3AP. Interacts (via domain NR LBD) with HSP90AA1 and HSP90AB1. In the absence of hormonal ligand, interacts with TACC1. Interacts (via NR LBD domain) with ZNF764 (via KRAB domain); the interaction regulates transcription factor activity of NR3C1 by directing its actions toward certain biologic pathways. In terms of processing, acetylation by CLOCK reduces its binding to glucocorticoid response elements and its transcriptional activity. Post-translationally, increased proteasome-mediated degradation in response to glucocorticoids. Phosphorylated in the absence of hormone; becomes hyperphosphorylated in the presence of glucocorticoid. The Ser-203, Ser-226 and Ser-404-phosphorylated forms are mainly cytoplasmic, and the Ser-211-phosphorylated form is nuclear. Phosphorylation at Ser-211 increases transcriptional activity. Phosphorylation at Ser-203, Ser-226 and Ser-404 decreases signaling capacity. Phosphorylation at Ser-404 may protect from glucocorticoid-induced apoptosis. Phosphorylation at Ser-203 and Ser-211 is not required in regulation of chromosome segregation. May be dephosphorylated by PPP5C, attenuates NR3C1 action. In terms of processing, ubiquitinated by UBR5, leading to its degradation: UBR5 specifically recognizes and binds ligand-bound NR3C1 when it is not associated with coactivators (NCOAs). In presence of NCOAs, the UBR5-degron is not accessible, preventing its ubiquitination and degradation. Post-translationally, sumoylation at Lys-277 and Lys-293 negatively regulates its transcriptional activity. Sumoylation at Lys-703 positively regulates its transcriptional activity in the presence of RWDD3. Sumoylation at Lys-277 and Lys-293 is dispensable whereas sumoylation at Lys-703 is critical for the stimulatory effect of RWDD3 on its transcriptional activity. Heat shock increases sumoylation in a RWDD3-dependent manner.

Its subcellular location is the cytoplasm. It localises to the nucleus. It is found in the mitochondrion. The protein localises to the cytoskeleton. The protein resides in the spindle. Its subcellular location is the microtubule organizing center. It localises to the centrosome. It is found in the chromosome. The protein localises to the nucleoplasm. Functionally, receptor for glucocorticoids (GC). Has a dual mode of action: as a transcription factor that binds to glucocorticoid response elements (GRE), both for nuclear and mitochondrial DNA, and as a modulator of other transcription factors. Affects inflammatory responses, cellular proliferation and differentiation in target tissues. Involved in chromatin remodeling. Plays a role in rapid mRNA degradation by binding to the 5' UTR of target mRNAs and interacting with PNRC2 in a ligand-dependent manner which recruits the RNA helicase UPF1 and the mRNA-decapping enzyme DCP1A, leading to RNA decay. Could act as a coactivator for STAT5-dependent transcription upon growth hormone (GH) stimulation and could reveal an essential role of hepatic GR in the control of body growth. Mediates glucocorticoid-induced apoptosis. Promotes accurate chromosome segregation during mitosis. May act as a tumor suppressor. May play a negative role in adipogenesis through the regulation of lipolytic and antilipogenic gene expression. The polypeptide is Glucocorticoid receptor (NR3C1) (Saguinus oedipus (Cotton-top tamarin)).